The following is a 376-amino-acid chain: Putative type I restriction enzyme MpnIIP endonuclease subunit N-terminal part (376 aa).

Functionally, the N-terminal section of a putative type I restriction enzyme that if reconstituted might recognize 5'-GAN(7)TAY-3' and cleave a random distance away. Subunit R is required for both nuclease and ATPase activities, but not for modification. This is Putative type I restriction enzyme MpnIIP endonuclease subunit N-terminal part from Mycoplasma pneumoniae (strain ATCC 29342 / M129 / Subtype 1) (Mycoplasmoides pneumoniae).